The following is a 458-amino-acid chain: NADH-ubiquinone oxidoreductase chain 4 (458 aa).

The next 13 helical transmembrane spans lie at 23–43, 59–79, 99–119, 148–168, 174–194, 197–217, 227–247, 260–280, 289–311, 315–337, 355–375, 396–416, and 438–458; these read LLWT…TLTL, IDQF…LTIM, LLIL…LLMF, LYFL…LIMI, SLSI…TPWS, LWWI…IFHL, PIAG…YGMI, LAVP…SICL, IAYS…TPWA, ALAM…NITY, FPLM…LPPF, ILLL…MLIM, and LMLM…AIMI.

Belongs to the complex I subunit 4 family.

The protein resides in the mitochondrion membrane. It catalyses the reaction a ubiquinone + NADH + 5 H(+)(in) = a ubiquinol + NAD(+) + 4 H(+)(out). Core subunit of the mitochondrial membrane respiratory chain NADH dehydrogenase (Complex I) that is believed to belong to the minimal assembly required for catalysis. Complex I functions in the transfer of electrons from NADH to the respiratory chain. The immediate electron acceptor for the enzyme is believed to be ubiquinone. The polypeptide is NADH-ubiquinone oxidoreductase chain 4 (MT-ND4) (Petromyzon marinus (Sea lamprey)).